Reading from the N-terminus, the 247-residue chain is Nodulation protein H (247 aa).

The tract at residues 1-17 (MTHSTLPPQPFAILAMP) is hydrophobic.

Functionally, required for the formation of sulfated nod factor. Proposed to transfer activated sulfate (PAPS) to a N-acetylglucosamine of the nod factor. This Rhizobium meliloti (strain 1021) (Ensifer meliloti) protein is Nodulation protein H (nodH).